We begin with the raw amino-acid sequence, 98 residues long: Large ribosomal subunit protein uL23 (98 aa).

This sequence belongs to the universal ribosomal protein uL23 family. In terms of assembly, part of the 50S ribosomal subunit. Contacts protein L29, and trigger factor when it is bound to the ribosome.

One of the early assembly proteins it binds 23S rRNA. One of the proteins that surrounds the polypeptide exit tunnel on the outside of the ribosome. Forms the main docking site for trigger factor binding to the ribosome. The polypeptide is Large ribosomal subunit protein uL23 (Marinomonas sp. (strain MWYL1)).